Reading from the N-terminus, the 396-residue chain is Acetate kinase (396 aa).

Residue Asn-8 coordinates Mg(2+). Lys-15 lines the ATP pocket. Substrate is bound at residue Arg-89. Residue Asp-146 is the Proton donor/acceptor of the active site. Residues 206-210 (HIGNG), 283-285 (DMR), and 331-335 (GVGEN) contribute to the ATP site. Glu-383 contacts Mg(2+).

Belongs to the acetokinase family. In terms of assembly, homodimer. It depends on Mg(2+) as a cofactor. The cofactor is Mn(2+).

Its subcellular location is the cytoplasm. The enzyme catalyses acetate + ATP = acetyl phosphate + ADP. Its pathway is metabolic intermediate biosynthesis; acetyl-CoA biosynthesis; acetyl-CoA from acetate: step 1/2. In terms of biological role, catalyzes the formation of acetyl phosphate from acetate and ATP. Can also catalyze the reverse reaction. The sequence is that of Acetate kinase from Streptococcus pneumoniae serotype 2 (strain D39 / NCTC 7466).